The primary structure comprises 1090 residues: Exocyst complex component SEC5A (1090 aa).

The disordered stretch occupies residues 18 to 128; the sequence is LKEQAKRDLT…ARKEDDGAWD (111 aa). The span at 45 to 69 shows a compositional bias: low complexity; sequence QQPRQQKPVAAAAAPPKKSAAAVRK. The span at 109–124 shows a compositional bias: basic and acidic residues; the sequence is RGSDVREKGRARKEDD. Ser180 carries the post-translational modification Phosphoserine. Disordered regions lie at residues 759 to 783, 987 to 1010, and 1046 to 1090; these read TSRQDNWKNGYSDEHQEEPSANTYG, VETPGHNRRPTRGSEDTVSDDKQS, and APLE…PRRR. Over residues 998 to 1009 the composition is skewed to basic and acidic residues; that stretch reads RGSEDTVSDDKQ. The segment covering 1058–1082 has biased composition (polar residues); it reads TYSSFRGSMDSPSRNYRGSQSSGSP.

The protein belongs to the SEC5 family. As to quaternary structure, the exocyst complex is composed of SEC3, SEC5, SEC6, SEC8, SEC10, EXO70A1 and EXO84B. Interacts with SEC3A and EXO70B1. Binds to EXO70H1 and EXO70B2. Binds directly to B1L.

It is found in the cytoplasm. The protein resides in the cytosol. Its subcellular location is the secreted. The protein localises to the extracellular exosome. In terms of biological role, component of the exocyst complex involved in the docking of exocytic vesicles with fusion sites on the plasma membrane during regulated or polarized secretion. Involved in polarized cell growth and organ morphogenesis. During cytokinesis, involved in cell plate initiation, cell plate maturation and formation of new primary cell wall. Probable component of an exocyst subcomplex specifically involved in autophagy-related, Golgi-independent membrane traffic to the vacuole. Regulates autophagosome formation and autophagy-related Golgi-independent import into the vacuole. In Arabidopsis thaliana (Mouse-ear cress), this protein is Exocyst complex component SEC5A.